Here is a 434-residue protein sequence, read N- to C-terminus: Glutamate-1-semialdehyde 2,1-aminomutase 1 (434 aa).

An N6-(pyridoxal phosphate)lysine modification is found at lysine 270.

It belongs to the class-III pyridoxal-phosphate-dependent aminotransferase family. HemL subfamily. As to quaternary structure, homodimer. Requires pyridoxal 5'-phosphate as cofactor.

The protein resides in the cytoplasm. The catalysed reaction is (S)-4-amino-5-oxopentanoate = 5-aminolevulinate. Its pathway is porphyrin-containing compound metabolism; protoporphyrin-IX biosynthesis; 5-aminolevulinate from L-glutamyl-tRNA(Glu): step 2/2. The polypeptide is Glutamate-1-semialdehyde 2,1-aminomutase 1 (Bacillus thuringiensis (strain Al Hakam)).